The following is a 113-amino-acid chain: UPF0122 protein LAF_1235 (113 aa).

This sequence belongs to the UPF0122 family.

Functionally, might take part in the signal recognition particle (SRP) pathway. This is inferred from the conservation of its genetic proximity to ftsY/ffh. May be a regulatory protein. In Limosilactobacillus fermentum (strain NBRC 3956 / LMG 18251) (Lactobacillus fermentum), this protein is UPF0122 protein LAF_1235.